The primary structure comprises 1040 residues: Multidrug resistance protein MdtB (1040 aa).

The next 12 membrane-spanning stretches (helical) occupy residues 25 to 45 (LLMAAILLAGIIGYRFLPVAA), 347 to 367 (LMLAIALVVMIIYLFLRNIPA), 369 to 389 (IIPGVAVPLSLIGTFAVMVFL), 396 to 416 (LTLMALTIATGFVVDDAIVVI), 440 to 460 (IGFTIISLTFSLIAVLIPLLF), 472 to 492 (FAVTLAVAILISAVVSLTLTP), 537 to 557 (WLTLSVAFATLLLSVMLWIVI), 863 to 883 (LGSTVWLIVAAVVAMYIVLGV), 888 to 908 (FIHPITILSTLPTAGVGALLA), 910 to 930 (IIAGSELDIIAIIGIILLIGI), 968 to 988 (ILMTTLAALLGALPLMLSTGV), and 998 to 1018 (IAMVGGLLVSQVLTLFTTPVI).

Belongs to the resistance-nodulation-cell division (RND) (TC 2.A.6) family. MdtB subfamily. As to quaternary structure, part of a tripartite efflux system composed of MdtA, MdtB and MdtC. MdtB forms a heteromultimer with MdtC.

The protein resides in the cell inner membrane. The polypeptide is Multidrug resistance protein MdtB (Salmonella paratyphi A (strain ATCC 9150 / SARB42)).